The sequence spans 227 residues: Lysosomal-associated transmembrane protein 4B (227 aa).

Helical transmembrane passes span isoleucine 26–alanine 46, methionine 72–glycine 92, tryptophan 100–isoleucine 120, and cysteine 153–isoleucine 173. Positions proline 205–proline 222 are required for NEDD4 interaction.

It belongs to the LAPTM4/LAPTM5 transporter family. In terms of assembly, homooligomer; upon reaching the lysosomes. Interacts with MCOLN1. Interacts with NEDD4; may play a role in the lysosomal sorting of LAPTM4B; enhances HGS association with NEDD4; mediates inhibition of EGFR degradation. Interacts with PIP5K1C; promotes SNX5 association with LAPTM4B; kinase activity of PIP5K1C is required; interaction is regulated by phosphatidylinositol 4,5-bisphosphate generated by PIP5K1C. Interacts with HGS; promotes HGS ubiquitination. Interacts with SNX5. Interacts with SLC3A2 and SLC7A5; recruits SLC3A2 and SLC7A5 to lysosomes to promote leucine uptake into these organelles and is required for mTORC1 activation. Interacts with LRRC32; decreases TGFB1 production in regulatory T cells. Interacts with BECN1; competes with EGFR for LAPTM4B binding; regulates EGFR activity. Interacts with EGFR; positively correlates with EGFR activation. Post-translationally, undergoes proteolytic cleavage following delivery to the lysosomes. Ubiquitinated by NEDD4.

Its subcellular location is the endomembrane system. It localises to the late endosome membrane. The protein resides in the cell membrane. The protein localises to the cell projection. It is found in the lysosome membrane. Its subcellular location is the endosome membrane. It localises to the endosome. The protein resides in the multivesicular body membrane. The protein localises to the multivesicular body lumen. Its function is as follows. Required for optimal lysosomal function. Blocks EGF-stimulated EGFR intraluminal sorting and degradation. Conversely by binding with the phosphatidylinositol 4,5-bisphosphate, regulates its PIP5K1C interaction, inhibits HGS ubiquitination and relieves LAPTM4B inhibition of EGFR degradation. Recruits SLC3A2 and SLC7A5 (the Leu transporter) to the lysosome, promoting entry of leucine and other essential amino acid (EAA) into the lysosome, stimulating activation of proton-transporting vacuolar (V)-ATPase protein pump (V-ATPase) and hence mTORC1 activation. Plays a role as negative regulator of TGFB1 production in regulatory T cells. Binds ceramide and facilitates its exit from late endosome in order to control cell death pathways. The chain is Lysosomal-associated transmembrane protein 4B from Mus musculus (Mouse).